Here is a 349-residue protein sequence, read N- to C-terminus: CCN family member 2 (349 aa).

A signal peptide spans 1 to 26 (MSATGLSPVRCAFVLLLALCSRPASG). The IGFBP N-terminal domain occupies 27 to 98 (QDCSGQCQCA…NRKIGVCTAK (72 aa)). 6 disulfides stabilise this stretch: Cys-29/Cys-54, Cys-33/Cys-56, Cys-35/Cys-57, Cys-43/Cys-60, Cys-68/Cys-82, and Cys-74/Cys-95. Positions 101–167 (APCVFGGTVY…GKCCEEWVCD (67 aa)) constitute a VWFC domain. In terms of domain architecture, TSP type-1 spans 198 to 243 (NCLVQTTEWSACSKTCGMGISTRVTNDNAFCRLEKQSRLCMVRPCE). The interval 247 to 349 (EENIKKGKKC…YYRKMYGDMA (103 aa)) is heparin-binding. Cystine bridges form between Cys-256–Cys-293, Cys-273–Cys-307, Cys-284–Cys-323, Cys-287–Cys-325, and Cys-292–Cys-329. Residues 256–330 (CIRTPKISKP…KTCACHYNCP (75 aa)) enclose the CTCK domain.

This sequence belongs to the CCN family. As to quaternary structure, monomer. Interacts with TSKU.

Its subcellular location is the secreted. The protein resides in the extracellular space. It localises to the extracellular matrix. Functionally, major connective tissue mitoattractant secreted by vascular endothelial cells. Promotes proliferation and differentiation of chondrocytes. Is involved in the stimulation of osteoblast differentiation and has a critical role in osteogenesis. Mediates heparin- and divalent cation-dependent cell adhesion in many cell types including fibroblasts, myofibroblasts, endothelial and epithelial cells. Enhances fibroblast growth factor-induced DNA synthesis. This chain is CCN family member 2 (CCN2), found in Sus scrofa (Pig).